We begin with the raw amino-acid sequence, 142 residues long: Large ribosomal subunit protein bL27m (142 aa).

A disordered region spans residues 27-48 (TKKSAGSTKNGRTSQPKNLGLK). A compositionally biased stretch (polar residues) spans 30–43 (SAGSTKNGRTSQPK).

It belongs to the bacterial ribosomal protein bL27 family.

Its subcellular location is the mitochondrion. The polypeptide is Large ribosomal subunit protein bL27m (mrpl27) (Dictyostelium discoideum (Social amoeba)).